Here is an 872-residue protein sequence, read N- to C-terminus: MAYFQDRKTSSRSLPSYINHSTQNLVGPRKDETNLSEYMKLRLLQSPSQVIYNLENTVSLYRRCLNLRKRLMDISELAAFFDSIHREALNSSFKILEFKDIEFDDPVTEIWLFCRLGYPLCALFNCLPVKQKLEVNSSVSLENTNVCKASLYRFMLMCKNELGLTDAALFSISEIYKPSTAPLVRALQTIELLLKKYEVSNTTKSSSTPSPSTDDNVPTGTLNSLIASGRRVTAELYETELKYIQDLEYLSNYMVILQQKQILSQDTILSIFTNLNEILDFQRRFLVGLEMNLSLPVEEQRLGALFIALEEGFSVYQVFCTNFPNAQQLIIDNQNQLLKVANLLEPSYELPALLIKPIQRICKYPLLLNQLLKGTPSGYQYEEELKQGMACVVRVANQVNETRRIHENRNAIIELEQRVIDWKGYSLQYFGQLLVWDVVNVCKADIEREYHVYLFEKILLCCKEMSTLKRQARSISMNKKTKRLDSLQLKGRILTSNITTVVPNHHMGSYAIQIFWRGDPQHESFILKLRNEESHKLWMSVLNRLLWKNEHGSPKDIRSAASTPANPVYNRSSSQTSKGYNSSDYDLLRTHSLDENVNSPTSISSPSSKSSPFTKTTSKDTKSATTTDERPSDFIRLNSEESVGTSSLRTSQTTSTIVSNDSSSTASIPSQISRISQVNSLLNDYNYNRQSHITRVYSGTDDGSSVSIFEDTSSSTKQKIFDQPTTNDCDVMRPRQYSYSAGMKSDGSLLPSTKHTSLSSSSTSTSLSVRNTTNVKIRLRLHEVSLVLVVAHDITFDELLAKVEHKIKLCGILKQAVPFRVRLKYVDEDGDFITITSDEDVLMAFETCTFELMDPVHNKGMDTVSLHVVVYF.

Positions 1 to 29 are disordered; the sequence is MAYFQDRKTSSRSLPSYINHSTQNLVGPR. The span at 11–25 shows a compositional bias: polar residues; sequence SRSLPSYINHSTQNL. The Calponin-homology (CH) domain maps to 82 to 198; sequence DSIHREALNS…TIELLLKKYE (117 aa). The region spanning 228–402 is the DH domain; that stretch reads SGRRVTAELY…VRVANQVNET (175 aa). Positions 426–547 constitute a PH domain; the sequence is SLQYFGQLLV…WMSVLNRLLW (122 aa). Disordered stretches follow at residues 553 to 667 and 743 to 765; these read SPKD…STAS and MKSD…STST. Over residues 560–584 the composition is skewed to polar residues; it reads AASTPANPVYNRSSSQTSKGYNSSD. S583 carries the post-translational modification Phosphoserine. Over residues 599–616 the composition is skewed to low complexity; it reads SPTSISSPSSKSSPFTKT. Positions 617 to 633 are enriched in basic and acidic residues; the sequence is TSKDTKSATTTDERPSD. 2 stretches are compositionally biased toward low complexity: residues 645–667 and 748–765; these read TSSL…STAS and SLLP…STST. Residues 772 to 859 form the PB1 domain; that stretch reads TTNVKIRLRL…FELMDPVHNK (88 aa).

As to quaternary structure, scd1, scd2, cdc42, and ras1, in its GTP-bound state, act cooperatively to form a protein complex. Interacts with moe1 and cdc42.

It localises to the nucleus. The protein localises to the cytoplasm. Its function is as follows. Required for mating and morphogenesis. May contain a cryptic binding site for cdc42 that is enhanced by binding Ras. Interacts directly with scd2. Promotes the exchange of cdc42-bound GDP by GTP. Involved in septation and stimulates the elongation of conjugation tubes. This Schizosaccharomyces pombe (strain 972 / ATCC 24843) (Fission yeast) protein is Rho guanine nucleotide exchange factor scd1 (scd1).